Consider the following 277-residue polypeptide: Diaminopimelate epimerase (277 aa).

Substrate contacts are provided by Asn-11 and Asn-65. The Proton donor role is filled by Cys-74. Substrate is bound by residues 75 to 76 (GN), Asn-180, and 198 to 199 (ER). Cys-208 (proton acceptor) is an active-site residue. Substrate is bound at residue 209-210 (GT).

It belongs to the diaminopimelate epimerase family. In terms of assembly, homodimer.

It localises to the cytoplasm. It carries out the reaction (2S,6S)-2,6-diaminopimelate = meso-2,6-diaminopimelate. It participates in amino-acid biosynthesis; L-lysine biosynthesis via DAP pathway; DL-2,6-diaminopimelate from LL-2,6-diaminopimelate: step 1/1. Functionally, catalyzes the stereoinversion of LL-2,6-diaminopimelate (L,L-DAP) to meso-diaminopimelate (meso-DAP), a precursor of L-lysine and an essential component of the bacterial peptidoglycan. The chain is Diaminopimelate epimerase from Gemmatimonas aurantiaca (strain DSM 14586 / JCM 11422 / NBRC 100505 / T-27).